Here is a 549-residue protein sequence, read N- to C-terminus: Maturase K (549 aa).

Belongs to the intron maturase 2 family. MatK subfamily.

Its subcellular location is the plastid. The protein localises to the chloroplast. Functionally, usually encoded in the trnK tRNA gene intron. Probably assists in splicing its own and other chloroplast group II introns. The protein is Maturase K of Albidella oligococca (Caldesia oligococca).